The following is a 224-amino-acid chain: Deoxyribose-phosphate aldolase (224 aa).

The active-site Proton donor/acceptor is Asp-92. Lys-154 functions as the Schiff-base intermediate with acetaldehyde in the catalytic mechanism. Lys-183 functions as the Proton donor/acceptor in the catalytic mechanism.

This sequence belongs to the DeoC/FbaB aldolase family. DeoC type 1 subfamily.

The protein localises to the cytoplasm. The catalysed reaction is 2-deoxy-D-ribose 5-phosphate = D-glyceraldehyde 3-phosphate + acetaldehyde. It participates in carbohydrate degradation; 2-deoxy-D-ribose 1-phosphate degradation; D-glyceraldehyde 3-phosphate and acetaldehyde from 2-deoxy-alpha-D-ribose 1-phosphate: step 2/2. In terms of biological role, catalyzes a reversible aldol reaction between acetaldehyde and D-glyceraldehyde 3-phosphate to generate 2-deoxy-D-ribose 5-phosphate. This is Deoxyribose-phosphate aldolase from Mannheimia succiniciproducens (strain KCTC 0769BP / MBEL55E).